The chain runs to 180 residues: ATP-dependent protease subunit HslV (180 aa).

T7 is an active-site residue. Na(+)-binding residues include A165, C168, and T171.

Belongs to the peptidase T1B family. HslV subfamily. As to quaternary structure, a double ring-shaped homohexamer of HslV is capped on each side by a ring-shaped HslU homohexamer. The assembly of the HslU/HslV complex is dependent on binding of ATP.

It localises to the cytoplasm. The catalysed reaction is ATP-dependent cleavage of peptide bonds with broad specificity.. Its activity is regulated as follows. Allosterically activated by HslU binding. Its function is as follows. Protease subunit of a proteasome-like degradation complex believed to be a general protein degrading machinery. This chain is ATP-dependent protease subunit HslV, found in Geobacillus sp. (strain WCH70).